The chain runs to 459 residues: Exodeoxyribonuclease 7 large subunit (459 aa).

It belongs to the XseA family. As to quaternary structure, heterooligomer composed of large and small subunits.

It localises to the cytoplasm. It carries out the reaction Exonucleolytic cleavage in either 5'- to 3'- or 3'- to 5'-direction to yield nucleoside 5'-phosphates.. Bidirectionally degrades single-stranded DNA into large acid-insoluble oligonucleotides, which are then degraded further into small acid-soluble oligonucleotides. The sequence is that of Exodeoxyribonuclease 7 large subunit from Pseudomonas entomophila (strain L48).